A 569-amino-acid chain; its full sequence is Proline--tRNA ligase (569 aa).

It belongs to the class-II aminoacyl-tRNA synthetase family. ProS type 1 subfamily. Homodimer.

The protein resides in the cytoplasm. It catalyses the reaction tRNA(Pro) + L-proline + ATP = L-prolyl-tRNA(Pro) + AMP + diphosphate. Its function is as follows. Catalyzes the attachment of proline to tRNA(Pro) in a two-step reaction: proline is first activated by ATP to form Pro-AMP and then transferred to the acceptor end of tRNA(Pro). As ProRS can inadvertently accommodate and process non-cognate amino acids such as alanine and cysteine, to avoid such errors it has two additional distinct editing activities against alanine. One activity is designated as 'pretransfer' editing and involves the tRNA(Pro)-independent hydrolysis of activated Ala-AMP. The other activity is designated 'posttransfer' editing and involves deacylation of mischarged Ala-tRNA(Pro). The misacylated Cys-tRNA(Pro) is not edited by ProRS. The chain is Proline--tRNA ligase from Legionella pneumophila (strain Corby).